The chain runs to 131 residues: Maturin (131 aa).

The span at 107-120 shows a compositional bias: acidic residues; that stretch reads FEEYNADVEEEEPE. A disordered region spans residues 107 to 131; sequence FEEYNADVEEEEPEADHQQMGVSQQ.

It belongs to the MTURN family.

Its subcellular location is the cytoplasm. Its function is as follows. Involved in early neuronal development; required for cell cycle exit and differentiation of primary neurons. Cooperates synergistically with pak3 to promote primary neural differentiation within the neural plate. May play a role in promoting megakaryocyte differentiation. This is Maturin (mturn) from Xenopus laevis (African clawed frog).